Reading from the N-terminus, the 140-residue chain is Thioredoxin H9 (140 aa).

Gly2 carries N-myristoyl glycine lipidation. Cys4 carries S-palmitoyl cysteine lipidation. At Ser14 the chain carries Phosphoserine. The region spanning 25-129 (VHLITTKESW…PELQKKVTSI (105 aa)) is the Thioredoxin domain. Active-site nucleophile residues include Cys57 and Cys60. A disulfide bond links Cys57 and Cys60. Phosphoserine is present on Ser136.

It belongs to the thioredoxin family. Plant H-type subfamily. In terms of tissue distribution, ubiquitous.

It is found in the cell membrane. Probable thiol-disulfide oxidoreductase that may play a role in intercellular communication due to its ability to move from cell to cell. The polypeptide is Thioredoxin H9 (TRX9) (Arabidopsis thaliana (Mouse-ear cress)).